Reading from the N-terminus, the 247-residue chain is D-alanyl-D-alanine dipeptidase (247 aa).

Residues His140 and Asp147 each contribute to the Zn(2+) site. Catalysis depends on Glu215, which acts as the Proton donor/acceptor. His218 lines the Zn(2+) pocket.

It belongs to the peptidase M15D family. Zn(2+) is required as a cofactor.

It is found in the cytoplasm. It carries out the reaction D-alanyl-D-alanine + H2O = 2 D-alanine. Its function is as follows. Catalyzes hydrolysis of the D-alanyl-D-alanine dipeptide. May have a role in cell-wall turnover. In Synechocystis sp. (strain ATCC 27184 / PCC 6803 / Kazusa), this protein is D-alanyl-D-alanine dipeptidase.